Here is a 206-residue protein sequence, read N- to C-terminus: Shieldin complex subunit 1 (206 aa).

The interval 27–94 is disordered; that stretch reads SSYEASQRVS…GQLETNEEED (68 aa). Residues 32-55 are compositionally biased toward low complexity; that stretch reads SQRVSQGSSNSLSSLESHPFLSSS. A compositionally biased stretch (polar residues) spans 56-74; the sequence is TTDPDSNSLNTEQKGSWDS.

Component of the shieldin complex, consisting of SHLD1, SHLD2, SHLD3 and MAD2L2/REV7. Within the complex, SHLD2 forms a scaffold which interacts with a SHLD3-MAD2L2 subcomplex via its N-terminus, and with SHLD1 via its C-terminus. Interacts with ASTE1.

It localises to the chromosome. In terms of biological role, component of the shieldin complex, which plays an important role in repair of DNA double-stranded breaks (DSBs). During G1 and S phase of the cell cycle, the complex functions downstream of TP53BP1 to promote non-homologous end joining (NHEJ) and suppress DNA end resection. Mediates various NHEJ-dependent processes including immunoglobulin class-switch recombination, and fusion of unprotected telomeres. In Mus musculus (Mouse), this protein is Shieldin complex subunit 1.